The sequence spans 615 residues: Sodium-dependent noradrenaline transporter (615 aa).

Positions 1–28 (MLLARMNPQVQPENGGAGPGSEQPPRKR) are disordered. Residues 1–60 (MLLARMNPQVQPENGGAGPGSEQPPRKRKEVLVVKERNGVQCLLASRDGDEQPRETWGKK) lie on the Cytoplasmic side of the membrane. A helical membrane pass occupies residues 61-86 (IDFLLSVVGFAVDLANVWRFPYLCYK). Gly69, Ala71, and Val72 together coordinate Na(+). Asp73 provides a ligand contact to (R)-noradrenaline. Asp73 serves as a coordination point for dopamine. Asn76 is a Na(+) binding site. 2 residues coordinate (R)-noradrenaline: Tyr85 and Lys86. Residues 87–90 (NGGG) lie on the Extracellular side of the membrane. The helical transmembrane segment at 91–114 (AFLIPYTLFLIIAGMPLFYMELAL) threads the bilayer. Topologically, residues 115-133 (GQYNREGAATVWKICPFFK) are cytoplasmic. The helical transmembrane segment at 134-164 (GVGYAVILIALYVGFYYNVIIAWSLYYLFSS) threads the bilayer. Positions 143 and 147 each coordinate (R)-noradrenaline. Residue Ala143 participates in dopamine binding. Topologically, residues 165–231 (FTPTLPWTDC…SSGIHDIGLP (67 aa)) are extracellular. Residues Cys174 and Cys183 are joined by a disulfide bond. N-linked (GlcNAc...) asparagine glycans are attached at residues Asn182, Asn190, and Asn196. Residues 232 to 252 (QWQLLLCLIIVVIVLFFSLWK) form a helical membrane-spanning segment. Over 253 to 255 (GVK) the chain is Cytoplasmic. The helical transmembrane segment at 256–280 (TSGKVVWITATLPYLVLFVLLVHGI) threads the bilayer. The Extracellular segment spans residues 281-304 (TLPGASNGINAYLHIDFYRLKEAT). A helical membrane pass occupies residues 305 to 330 (VWIDAATQIFFSLGAGFGVLIAFASY). A (R)-noradrenaline-binding site is contributed by Phe315. Phe315 serves as a coordination point for dopamine. Ser316 lines the Na(+) pocket. Residues 331-336 (NKFDNN) lie on the Cytoplasmic side of the membrane. Residues 337–360 (CYRDALLTSTINCVTSFISGFAIF) form a helical membrane-spanning segment. Asn348 lines the Na(+) pocket. At 361-400 (SILGYMAHEHKVNIEDVATEGAGLVFILYPEAISTLSGST) the chain is on the extracellular side. Glu380 contributes to the (R)-noradrenaline binding site. Glu380 contacts dopamine. Residues 401-426 (FWAIVFFIMLLALGIDSSMGGMEAVI) traverse the membrane as a helical segment. Residues Asp416 and Ser417 each contribute to the Na(+) site. At 427-441 (TGLADDFQVLKRHRK) the chain is on the cytoplasmic side. Residues 442-462 (LFTFAVSFGTFLLALFCITKG) traverse the membrane as a helical segment. Position 463 (Gly463) is a topological domain, extracellular. The helical transmembrane segment at 464–490 (IYVLTLLDTFAAGTSILFAVLMEAIGV) threads the bilayer. Over 491 to 520 (SWFYGVDRFSNDIQQMMGFKPGLYWRLCWK) the chain is Cytoplasmic. Residues 521–543 (FVSPAFLLFVVIVSIINFKPLTY) form a helical membrane-spanning segment. Residues 544–546 (DDY) are Extracellular-facing. Residues 547–567 (IFPLWANWVGWGIAGSSMVLV) traverse the membrane as a helical segment. Topologically, residues 568–615 (PAYIVYKFFSTRGSIRERLAYGITPASEHHLVAQRDIRQFQLQHWLAI) are cytoplasmic.

This sequence belongs to the sodium:neurotransmitter symporter (SNF) (TC 2.A.22) family. SLC6A2 subfamily. Monomer. Can form homodimers in the cell membrane; homodimerization is mostly mediated by cholesterol and lipids, and regulates neurotransmitter transport activity. Interacts with PRKCABP. Post-translationally, palmitoylated. Palmitoylation regulates protein levels and neurotransmitter transport.

The protein resides in the cell membrane. It localises to the cell projection. It is found in the axon. The protein localises to the synapse. Its subcellular location is the synaptosome. The enzyme catalyses (R)-noradrenaline(out) + chloride(out) + Na(+)(out) = (R)-noradrenaline(in) + chloride(in) + Na(+)(in). It carries out the reaction dopamine(out) + chloride(out) + Na(+)(out) = dopamine(in) + chloride(in) + Na(+)(in). The catalysed reaction is dopamine(out) + chloride(out) + 2 Na(+)(out) = dopamine(in) + chloride(in) + 2 Na(+)(in). With respect to regulation, inhibited by nisoxetine, oxaprotiline and desipramin. In terms of biological role, mediates sodium- and chloride-dependent transport of norepinephrine (also known as noradrenaline), the primary signaling neurotransmitter in the autonomic sympathetic nervous system. Is responsible for norepinephrine re-uptake and clearance from the synaptic cleft, thus playing a crucial role in norepinephrine inactivation and homeostasis. Can also mediate sodium- and chloride-dependent transport of dopamine. This Bos taurus (Bovine) protein is Sodium-dependent noradrenaline transporter (SLC6A2).